Reading from the N-terminus, the 348-residue chain is Phosphoribosylformylglycinamidine cyclo-ligase (348 aa).

It belongs to the AIR synthase family.

The protein localises to the cytoplasm. It carries out the reaction 2-formamido-N(1)-(5-O-phospho-beta-D-ribosyl)acetamidine + ATP = 5-amino-1-(5-phospho-beta-D-ribosyl)imidazole + ADP + phosphate + H(+). It functions in the pathway purine metabolism; IMP biosynthesis via de novo pathway; 5-amino-1-(5-phospho-D-ribosyl)imidazole from N(2)-formyl-N(1)-(5-phospho-D-ribosyl)glycinamide: step 2/2. This is Phosphoribosylformylglycinamidine cyclo-ligase from Cereibacter sphaeroides (strain ATCC 17023 / DSM 158 / JCM 6121 / CCUG 31486 / LMG 2827 / NBRC 12203 / NCIMB 8253 / ATH 2.4.1.) (Rhodobacter sphaeroides).